We begin with the raw amino-acid sequence, 572 residues long: Sulfite reductase [NADPH] hemoprotein beta-component (572 aa).

Positions 436, 442, 481, and 485 each coordinate [4Fe-4S] cluster. Cys-485 lines the siroheme pocket.

This sequence belongs to the nitrite and sulfite reductase 4Fe-4S domain family. As to quaternary structure, alpha(8)-beta(8). The alpha component is a flavoprotein, the beta component is a hemoprotein. Siroheme serves as cofactor. [4Fe-4S] cluster is required as a cofactor.

It carries out the reaction hydrogen sulfide + 3 NADP(+) + 3 H2O = sulfite + 3 NADPH + 4 H(+). The protein operates within sulfur metabolism; hydrogen sulfide biosynthesis; hydrogen sulfide from sulfite (NADPH route): step 1/1. In terms of biological role, component of the sulfite reductase complex that catalyzes the 6-electron reduction of sulfite to sulfide. This is one of several activities required for the biosynthesis of L-cysteine from sulfate. The chain is Sulfite reductase [NADPH] hemoprotein beta-component from Bacillus pumilus (strain SAFR-032).